The primary structure comprises 535 residues: Flavin-containing monooxygenase 1 (535 aa).

N-acetylalanine is present on alanine 2. At 2-513 (AKRVAIVGAG…TRIVQESSSP (512 aa)) the chain is on the lumenal side. Residues 9-13 (GAGVS), glutamate 32, 40-41 (LW), and 61-62 (NS) contribute to the FAD site. NADP(+)-binding positions include 60-61 (SN) and 195-198 (SGTD). Residues 514-534 (FESLLKLFAVLALLVSVFLIF) form a helical membrane-spanning segment. A topological domain (cytoplasmic) is located at residue leucine 535.

It belongs to the FMO family. FAD is required as a cofactor. In terms of tissue distribution, liver.

The protein localises to the endoplasmic reticulum membrane. It carries out the reaction hypotaurine + NADPH + O2 + H(+) = taurine + NADP(+) + H2O. It catalyses the reaction hypotaurine + NADH + O2 + H(+) = taurine + NAD(+) + H2O. The enzyme catalyses trimethylamine + NADPH + O2 = trimethylamine N-oxide + NADP(+) + H2O. The catalysed reaction is N,N-dimethylaniline + NADPH + O2 + H(+) = N,N-dimethylaniline N-oxide + NADP(+) + H2O. In terms of biological role, broad spectrum monooxygenase that catalyzes the oxygenation of a wide variety of nitrogen- and sulfur-containing compounds including xenobiotics. Catalyzes the S-oxygenation of hypotaurine to produce taurine, an organic osmolyte involved in cell volume regulation as well as a variety of cytoprotective and developmental processes. In vitro, catalyzes the N-oxygenation of trimethylamine (TMA) to produce trimethylamine N-oxide (TMAO) and could therefore participate to the detoxification of this compound that is generated by the action of gut microbiota from dietary precursors such as choline, choline containing compounds, betaine or L-carnitine. This chain is Flavin-containing monooxygenase 1 (FMO1), found in Oryctolagus cuniculus (Rabbit).